A 639-amino-acid chain; its full sequence is MAKRVSILDQHKKPSSARVRVAVRLRPYMEKEDEKAPAACVRGLDSQSLEIVNWRNQLETMQYQFDAFYGDSATQREIYMGSVCHILPHLLIGQNASVFAYGPTGAGKTHTMLGNPSQPGVIPRAVRDLLQMTRTAAGGPENENWTYTITMSYVEIYQEKVMDLLEPKNKDLPIREDKDHNILIPGVTQKTINSFGDFDEHFIPASQNRTVASTKLNDRSSRSHAVLLIKVQKSQQVSPFRQLTGKLYLIDLAGSEDNRRTGNQGIRLKESGAINSSLFTLSKVVDALNQGLPRIPYRDSKLTRLLQDSLGGTAHSVMIANIAPEQKYYFDTLTALNFAAKSKQIINKPFSQETTQSIAALPAMKRPREEAETAAGSRQRKKSKTDSTESSPNTSMDAASKRKLNLAALDPAVVERLLKLDKILTEKGMKEAQLLSTPKRERMALLKKWEESQMEIERLKEKQKELEQKAIEAEARLEKSTNSDCNLSDSSVSECTFRAPLRGRNTSTAKAKKVLRVLPMQGNSQLQSTIEEGIPVFEKKKKKPVSCDGRENQPTWEVNVRTDLLESGRERILKLLNTGSVKELKSLQKIGDKKAKLIIGWREVNGPFKNVEDLASLEGISAKQVTSFIKANILSIIAS.

The Kinesin motor domain maps to 18 to 345 (RVRVAVRLRP…LNFAAKSKQI (328 aa)). 102–109 (GPTGAGKT) serves as a coordination point for ATP. Positions 358–400 (IAALPAMKRPREEAETAAGSRQRKKSKTDSTESSPNTSMDAAS) are disordered. A compositionally biased stretch (polar residues) spans 388–397 (TESSPNTSMD). The stretch at 439–484 (KRERMALLKKWEESQMEIERLKEKQKELEQKAIEAEARLEKSTNSD) forms a coiled coil. The short motif at 549 to 552 (GREN) is the Important for regulated proteolytic degradation element.

This sequence belongs to the TRAFAC class myosin-kinesin ATPase superfamily. Kinesin family. Post-translationally, ubiquitinated, leading to its subsequent proteasomal degradation.

The protein localises to the nucleus. Its subcellular location is the cytoplasm. The protein resides in the cytoskeleton. Its function is as follows. Kinesin family member that is involved in spindle formation and the movements of chromosomes during mitosis and meiosis. Binds to microtubules and to DNA. The sequence is that of Kinesin-like protein KIF22 (kif22) from Xenopus tropicalis (Western clawed frog).